The following is a 251-amino-acid chain: Hydroxyacylglutathione hydrolase (251 aa).

The Zn(2+) site is built by histidine 59, histidine 61, aspartate 63, histidine 64, histidine 118, aspartate 141, and histidine 179.

This sequence belongs to the metallo-beta-lactamase superfamily. Glyoxalase II family. In terms of assembly, monomer. It depends on Zn(2+) as a cofactor.

The enzyme catalyses an S-(2-hydroxyacyl)glutathione + H2O = a 2-hydroxy carboxylate + glutathione + H(+). It participates in secondary metabolite metabolism; methylglyoxal degradation; (R)-lactate from methylglyoxal: step 2/2. Functionally, thiolesterase that catalyzes the hydrolysis of S-D-lactoyl-glutathione to form glutathione and D-lactic acid. In Prochlorococcus marinus (strain NATL2A), this protein is Hydroxyacylglutathione hydrolase.